Reading from the N-terminus, the 249-residue chain is 2-C-methyl-D-erythritol 4-phosphate cytidylyltransferase (249 aa).

Belongs to the IspD/TarI cytidylyltransferase family. IspD subfamily.

The enzyme catalyses 2-C-methyl-D-erythritol 4-phosphate + CTP + H(+) = 4-CDP-2-C-methyl-D-erythritol + diphosphate. It functions in the pathway isoprenoid biosynthesis; isopentenyl diphosphate biosynthesis via DXP pathway; isopentenyl diphosphate from 1-deoxy-D-xylulose 5-phosphate: step 2/6. In terms of biological role, catalyzes the formation of 4-diphosphocytidyl-2-C-methyl-D-erythritol from CTP and 2-C-methyl-D-erythritol 4-phosphate (MEP). This Shewanella oneidensis (strain ATCC 700550 / JCM 31522 / CIP 106686 / LMG 19005 / NCIMB 14063 / MR-1) protein is 2-C-methyl-D-erythritol 4-phosphate cytidylyltransferase.